A 178-amino-acid chain; its full sequence is uncharacterized protein (178 aa).

Positions 1 to 23 (MNYSVIWAITILILGLVLTLAWA) are cleaved as a signal peptide.

This is an uncharacterized protein from Invertebrate iridescent virus 3 (IIV-3).